The chain runs to 199 residues: Nitrile hydratase subunit alpha (199 aa).

Fe(3+)-binding residues include C102, C105, S106, and C107. Cysteine sulfinic acid (-SO2H) is present on C105. At C107 the chain carries Cysteine sulfenic acid (-SOH).

It belongs to the nitrile hydratase subunit alpha family. As to quaternary structure, heterodimer of an alpha and a beta chain. Fe(3+) serves as cofactor. Oxidation on Cys-105 is essential for the activity. Post-translationally, oxidation on Cys-107 stabilizes the Fe-NO ligand coordinated in the inactive form.

The enzyme catalyses an aliphatic primary amide = an aliphatic nitrile + H2O. With respect to regulation, inactivated by oxidation of Cys-107 to a sulfenic acid. Its function is as follows. NHase catalyzes the hydration of various nitrile compounds to the corresponding amides. Industrial production of acrylamide is now being developed using some of the enzymes of this class. This is Nitrile hydratase subunit alpha (nthA) from Rhodococcus sp.